The following is a 270-amino-acid chain: Elongation factor Ts (270 aa).

An involved in Mg(2+) ion dislocation from EF-Tu region spans residues 75–78; the sequence is TDFV.

The protein belongs to the EF-Ts family.

Its subcellular location is the cytoplasm. In terms of biological role, associates with the EF-Tu.GDP complex and induces the exchange of GDP to GTP. It remains bound to the aminoacyl-tRNA.EF-Tu.GTP complex up to the GTP hydrolysis stage on the ribosome. The sequence is that of Elongation factor Ts from Cutibacterium acnes (strain DSM 16379 / KPA171202) (Propionibacterium acnes).